The following is an 857-amino-acid chain: RNA-directed RNA polymerase 2a (857 aa).

The 114-residue stretch at 511-624 (KHCLEIDLSK…FSVLPPVGDP (114 aa)) folds into the RdRp catalytic domain. The disordered stretch occupies residues 772-857 (TKQRKKKDGI…PCEHGGIIRI (86 aa)). Residues 800–812 (EKTETKVSHEEST) are compositionally biased toward basic and acidic residues.

This sequence belongs to the ssRNA positive-strand viruses RNA-directed RNA polymerase family. In terms of assembly, interacts with replication protein 1a.

It catalyses the reaction RNA(n) + a ribonucleoside 5'-triphosphate = RNA(n+1) + diphosphate. Its function is as follows. RNA-dependent RNA polymerase which replicates the viral genome composed of 3 RNA segments, RNA1, RNA2 and RNA3. The sequence is that of RNA-directed RNA polymerase 2a from Cucumis sativus (Cucumber).